The chain runs to 299 residues: tRNA dimethylallyltransferase (299 aa).

ATP is bound at residue 10 to 17 (GPTAVGKT). Residue 12 to 17 (TAVGKT) coordinates substrate. An interaction with substrate tRNA region spans residues 35-38 (DSQQ).

The protein belongs to the IPP transferase family. In terms of assembly, monomer. Requires Mg(2+) as cofactor.

It catalyses the reaction adenosine(37) in tRNA + dimethylallyl diphosphate = N(6)-dimethylallyladenosine(37) in tRNA + diphosphate. Functionally, catalyzes the transfer of a dimethylallyl group onto the adenine at position 37 in tRNAs that read codons beginning with uridine, leading to the formation of N6-(dimethylallyl)adenosine (i(6)A). This chain is tRNA dimethylallyltransferase, found in Streptococcus thermophilus (strain CNRZ 1066).